A 299-amino-acid chain; its full sequence is 5-azacytidine resistance protein azr1 (299 aa).

Residues 35-293 (KSHFPSPATL…DDTTITCLLI (259 aa)) enclose the PPM-type phosphatase domain.

In terms of biological role, confers azacytidine resistance in high copy. This is 5-azacytidine resistance protein azr1 (azr1) from Schizosaccharomyces pombe (strain 972 / ATCC 24843) (Fission yeast).